A 212-amino-acid polypeptide reads, in one-letter code: Large ribosomal subunit protein uL3 (212 aa).

The span at 140–155 (SVSHRAIGSTGQNQSP) shows a compositional bias: polar residues. A disordered region spans residues 140-166 (SVSHRAIGSTGQNQSPGKVFKGKKMPG). Gln-153 is subject to N5-methylglutamine.

It belongs to the universal ribosomal protein uL3 family. As to quaternary structure, part of the 50S ribosomal subunit. Forms a cluster with proteins L14 and L19. Post-translationally, methylated by PrmB.

In terms of biological role, one of the primary rRNA binding proteins, it binds directly near the 3'-end of the 23S rRNA, where it nucleates assembly of the 50S subunit. In Psychrobacter cryohalolentis (strain ATCC BAA-1226 / DSM 17306 / VKM B-2378 / K5), this protein is Large ribosomal subunit protein uL3.